The sequence spans 90 residues: Small ribosomal subunit protein bS16 (90 aa).

This sequence belongs to the bacterial ribosomal protein bS16 family.

The chain is Small ribosomal subunit protein bS16 from Bacillus cytotoxicus (strain DSM 22905 / CIP 110041 / 391-98 / NVH 391-98).